The sequence spans 329 residues: Ankyrin repeat and SOCS box protein 5 (329 aa).

ANK repeat units follow at residues 69 to 98 (ADRSPLHEAASQGRLLALRTLLSQGYNVNA), 102 to 131 (DHITPLHEACLGDHVACARTLLEAGANVNA), 135 to 164 (DGVTPLFNACSQGSTSCTELLLEYGAKAQL), 167 to 196 (CLPSPTHEAASKGHHEFLDLLISWGIDVDQ), 200 to 229 (HLGTPLYVACMSQQFHCIWKLLYAGADVQK), and 232 to 261 (YWDTPLHAAAQQSSTEIVNLLIEFGADINA). One can recognise an SOCS box domain in the interval 278-329 (MVERILLQHEATPSSLCQLCRLCIRNYIGRPRLHLIPQLQLPTLLQNFLQYR).

It belongs to the ankyrin SOCS box (ASB) family. Expressed in endothelial and smooth muscle cells of collateral arteries as well as in satellite cells.

It participates in protein modification; protein ubiquitination. Functionally, may be a substrate-recognition component of a SCF-like ECS (Elongin-Cullin-SOCS-box protein) E3 ubiquitin-protein ligase complex which mediates the ubiquitination and subsequent proteasomal degradation of target proteins. May play a role in the initiation of arteriogenesis. The chain is Ankyrin repeat and SOCS box protein 5 (ASB5) from Oryctolagus cuniculus (Rabbit).